Reading from the N-terminus, the 281-residue chain is Shikimate dehydrogenase (NADP(+)) (281 aa).

Shikimate-binding positions include serine 15–serine 17 and threonine 62. The active-site Proton acceptor is the lysine 66. 2 residues coordinate shikimate: asparagine 87 and aspartate 102. Residues glycine 127–serine 131, asparagine 151–arginine 156, and leucine 217 each bind NADP(+). Tyrosine 219 contacts shikimate. Glycine 241 provides a ligand contact to NADP(+).

It belongs to the shikimate dehydrogenase family. In terms of assembly, homodimer.

The enzyme catalyses shikimate + NADP(+) = 3-dehydroshikimate + NADPH + H(+). Its pathway is metabolic intermediate biosynthesis; chorismate biosynthesis; chorismate from D-erythrose 4-phosphate and phosphoenolpyruvate: step 4/7. In terms of biological role, involved in the biosynthesis of the chorismate, which leads to the biosynthesis of aromatic amino acids. Catalyzes the reversible NADPH linked reduction of 3-dehydroshikimate (DHSA) to yield shikimate (SA). The polypeptide is Shikimate dehydrogenase (NADP(+)) (Stenotrophomonas maltophilia (strain K279a)).